A 503-amino-acid chain; its full sequence is E3 ubiquitin-protein ligase IE61 (503 aa).

Residues 19–58 (CAICMSAISGLGKTLPCLHDFCFVCIQTWTSTSAQCPLCR) form an RING-type zinc finger. Disordered stretches follow at residues 175-194 (AVIT…PSSR), 367-418 (SGPI…LFVD), and 445-503 (AALP…VRRK). The segment covering 375–388 (GGSTSQDTSVSNIH) has biased composition (polar residues). Residues 389–403 (RSPPGGSSTQPSSGR) show a composition bias toward low complexity. The span at 404 to 414 (RPGRPKGVKRR) shows a compositional bias: basic residues. The segment covering 471–480 (PSTSGSSPSP) has biased composition (low complexity).

In terms of assembly, interacts with host BTRC; this interaction seems to inactivate SCF-mediated protein degradation in general.

The catalysed reaction is S-ubiquitinyl-[E2 ubiquitin-conjugating enzyme]-L-cysteine + [acceptor protein]-L-lysine = [E2 ubiquitin-conjugating enzyme]-L-cysteine + N(6)-ubiquitinyl-[acceptor protein]-L-lysine.. Functionally, RING-finger E3 ubiquitin ligase that degrades host SP100, one of the major components of ND10 nuclear bodies, thereby disrupting the organization of these bodies. Also plays a role in the inhibition of host NF-kappa-B pathway by blocking the SCF(BTRC)-mediated addition of ubiquitin chains to host IkappaBalpha/NFKBIA, thereby interfering with its degradation. The polypeptide is E3 ubiquitin-protein ligase IE61 (Cercopithecine herpesvirus 9 (strain DHV) (CeHV-9)).